Reading from the N-terminus, the 217-residue chain is Probable transaldolase (217 aa).

Lys83 acts as the Schiff-base intermediate with substrate in catalysis.

This sequence belongs to the transaldolase family. Type 3B subfamily.

The protein localises to the cytoplasm. It catalyses the reaction D-sedoheptulose 7-phosphate + D-glyceraldehyde 3-phosphate = D-erythrose 4-phosphate + beta-D-fructose 6-phosphate. It participates in carbohydrate degradation; pentose phosphate pathway; D-glyceraldehyde 3-phosphate and beta-D-fructose 6-phosphate from D-ribose 5-phosphate and D-xylulose 5-phosphate (non-oxidative stage): step 2/3. Transaldolase is important for the balance of metabolites in the pentose-phosphate pathway. The sequence is that of Probable transaldolase from Jannaschia sp. (strain CCS1).